The following is a 339-amino-acid chain: DNA-directed RNA polymerase subunit alpha (339 aa).

The segment at 1 to 235 (MVIQKNWQEL…DQLQVFVNFE (235 aa)) is alpha N-terminal domain (alpha-NTD). Residues 251 to 339 (FNPALLKKVD…DLAKRFEEHY (89 aa)) form an alpha C-terminal domain (alpha-CTD) region.

The protein belongs to the RNA polymerase alpha chain family. Homodimer. The RNAP catalytic core consists of 2 alpha, 1 beta, 1 beta' and 1 omega subunit. When a sigma factor is associated with the core the holoenzyme is formed, which can initiate transcription.

It carries out the reaction RNA(n) + a ribonucleoside 5'-triphosphate = RNA(n+1) + diphosphate. Its function is as follows. DNA-dependent RNA polymerase catalyzes the transcription of DNA into RNA using the four ribonucleoside triphosphates as substrates. This Methylorubrum extorquens (strain CM4 / NCIMB 13688) (Methylobacterium extorquens) protein is DNA-directed RNA polymerase subunit alpha.